Here is a 420-residue protein sequence, read N- to C-terminus: MSSSGDARPSQKGILLPAARANDTDEAAGRRSIAWPVARTCPFSPPEQYAALRAEEPIARAELWDGAPVWLISRQDHVRALLADPRVSIHPAKLPRLSPSDGEAEASRSLLTLDPPDHGALRGHFIPEFGLRRVRELRPSVEQIVTGLLDDLTARGDEADLLADFALPMATQVICRLLDIPYEDRDYFQERTEQATRPAAGEEALEALLELRDYLDRLISGKTGRESGDGMLGSMVAQARGGGLSHADVLDNAVLLLAAGHETTASMVTMSVLVLLQHPTAWRELTVNPGLLPGAVDELLRYLSIADGLRRSATADIEIDGHTIRAGDGLVFLLAAANRDEAVFSEPEAFDIHRSARRHVAFGYGPHQCLGQNLARMELEVALGAVLERLPALRPTTDVAGLRLKSDSAVFGVYELPVAW.

The segment at 1–28 (MSSSGDARPSQKGILLPAARANDTDEAA) is disordered. The heme site is built by His-118, Arg-122, Arg-311, His-367, and Cys-369.

It belongs to the cytochrome P450 family.

The enzyme catalyses 20-oxo-5-O-beta-D-mycaminosyltylonolide + 2 reduced [2Fe-2S]-[ferredoxin] + O2 + 2 H(+) = 5-O-beta-D-mycaminosyltylonolide + 2 oxidized [2Fe-2S]-[ferredoxin] + H2O. It functions in the pathway antibiotic biosynthesis; tylosin biosynthesis. Its function is as follows. Involved in the biosynthesis of the complex macrolide antibiotic tylosin. Catalyzes the hydroxylation of 20-oxo-5-O-beta-mycaminosyltylactone at the C-23 position to yield 5-O-beta-mycaminosyltylonolide. In Streptomyces fradiae (Streptomyces roseoflavus), this protein is 20-oxo-5-O-mycaminosyltylactone 23-monooxygenase.